The chain runs to 757 residues: MFQSNQYDEYNKTNKSDEENESNENENENENENENRSEDGDQDSEDSFIYEEDDEEEEDTPKLSFGAKFLAKHGHIEGQGLGKEKDGRIDLIEVDRFQSTKGLGFAENDLPEFYRVTKHILEDEDVDFPSKQRFEWISCNSEGYNFWEGFPVDHTLVKFVANDSITDKPRRGHCSVELLMELDQHKNALDTLDPNRFYVARKKSNPYESIKGSIFINRAAVKMANIDKLADLLTPIIPVPGKPRDFIYFGDVCAGPGGFTEYVYWKKTRGGKIKGEEGLDLDDVVKGFGFTIKGQCDWNVEKFSKQIPIHNFVKEYGLDDTGNILKSENIRDFSSKVFYNTNGFGLQLFLADGGINTDGKESLQELMLQQLILCQILTMFETIGRGGNFVCKIFDTFTPFTIGLLYLVYQHFQSFSIVKPFTSRPLNSERYIICKNFLSYRPMNIIDFLHYINSLLNNNQTILELIEINSMDPNFLRYILESNELICLRQIKAFSLFKKYVEDIELPPIDQKEIRAKCLEEWGLPKETKYDIENYQKHKNRQKHHHNNHSNNNNNNNNSNNNNNNNNQHQHQHHQHQHHQNQHQNQYQHQNQHKKYNNNINNNSNNSSPNSSPNLTSSPNLNSPPNINNGNNHQNNNNNNSNNNNNNNNNNNNNNNNNNNNNNNNNNNKNRRFISTKLVKNNSQFQQKPPPPHRHMSPLQIQQQFLLQQQKEQQLLQQPQKDQLHQLHQQQSQSALPDFSAANFMEALLKRKNDSQQ.

The tract at residues 1–61 is disordered; sequence MFQSNQYDEY…EDDEEEEDTP (61 aa). Composition is skewed to acidic residues over residues 18–32 and 40–59; these read EENESNENENENENE and GDQDSEDSFIYEEDDEEEED. Residues 62–108 enclose the G-patch domain; it reads KLSFGAKFLAKHGHIEGQGLGKEKDGRIDLIEVDRFQSTKGLGFAEN. The region spanning 214-438 is the RrmJ-type SAM-dependent 2'-O-MTase domain; sequence IFINRAAVKM…ERYIICKNFL (225 aa). Residues G257, E301, and D352 each coordinate S-adenosyl-L-methionine. The active-site Proton acceptor is K392. The segment covering 538–548 has biased composition (basic residues); the sequence is HKNRQKHHHNN. The tract at residues 538–670 is disordered; the sequence is HKNRQKHHHN…NNNNNNNNKN (133 aa). Low complexity predominate over residues 549 to 569; sequence HSNNNNNNNNSNNNNNNNNQH. Over residues 570–581 the composition is skewed to basic residues; sequence QHQHHQHQHHQN. Residues 597–668 show a composition bias toward low complexity; the sequence is NNNINNNSNN…NNNNNNNNNN (72 aa).

The enzyme catalyses a 5'-end (N(7)-methyl 5'-triphosphoguanosine)-ribonucleoside in mRNA + S-adenosyl-L-methionine = a 5'-end (N(7)-methyl 5'-triphosphoguanosine)-(2'-O-methyl-ribonucleoside) in mRNA + S-adenosyl-L-homocysteine + H(+). Its function is as follows. S-adenosyl-L-methionine-dependent methyltransferase that mediates mRNA cap1 2'-O-ribose methylation to the 5'-cap structure of mRNAs. Methylates the ribose of the first nucleotide of a m(7)GpppG-capped mRNA to produce m(7)GpppNmp (cap1). Cap1 modification is linked to higher levels of translation. The polypeptide is Cap-specific mRNA (nucleoside-2'-O-)-methyltransferase 1 (Dictyostelium discoideum (Social amoeba)).